The primary structure comprises 336 residues: tRNA N6-adenosine threonylcarbamoyltransferase (336 aa).

Residues histidine 111 and histidine 115 each contribute to the Fe cation site. Residues 134–138, aspartate 167, glycine 180, and asparagine 270 each bind substrate; that span reads LVSGG. Aspartate 298 provides a ligand contact to Fe cation.

This sequence belongs to the KAE1 / TsaD family. It depends on Fe(2+) as a cofactor.

The protein resides in the cytoplasm. The enzyme catalyses L-threonylcarbamoyladenylate + adenosine(37) in tRNA = N(6)-L-threonylcarbamoyladenosine(37) in tRNA + AMP + H(+). Required for the formation of a threonylcarbamoyl group on adenosine at position 37 (t(6)A37) in tRNAs that read codons beginning with adenine. Is involved in the transfer of the threonylcarbamoyl moiety of threonylcarbamoyl-AMP (TC-AMP) to the N6 group of A37, together with TsaE and TsaB. TsaD likely plays a direct catalytic role in this reaction. This is tRNA N6-adenosine threonylcarbamoyltransferase from Acinetobacter baumannii (strain SDF).